The chain runs to 533 residues: E3 ubiquitin-protein ligase MGRN1 (533 aa).

Gly-2 carries the N-myristoyl glycine lipid modification. The segment at 278 to 317 (ECVVCLSDLRDTLILPCRHLCLCTSCADTLRYQANNCPIC) adopts an RING-type zinc-finger fold. The Required for TSG101-binding motif lies at 385 to 388 (PSAP). Residue Tyr-390 is modified to Phosphotyrosine. The tract at residues 421–519 (QKGKTQSKSP…QPVPPADIYL (99 aa)) is disordered. Over residues 423–439 (GKTQSKSPDSTLRSPSS) the composition is skewed to polar residues. Phosphoserine is present on residues Ser-429, Ser-450, and Ser-502. A compositionally biased stretch (acidic residues) spans 443 to 454 (EEDEEKLSEDPE).

Interacts with MC1R and MC4R. Interacts with TSG101. Interacts with mislocalized cytosolically exposed PRNP; this interaction alters MGRN1 subcellular location and causes lysosomal enlargement. Post-translationally, autoubiquitinated in vitro.

It localises to the cytoplasm. It is found in the cytosol. Its subcellular location is the cell membrane. The protein resides in the early endosome. It carries out the reaction S-ubiquitinyl-[E2 ubiquitin-conjugating enzyme]-L-cysteine + [acceptor protein]-L-lysine = [E2 ubiquitin-conjugating enzyme]-L-cysteine + N(6)-ubiquitinyl-[acceptor protein]-L-lysine.. Its pathway is protein modification; protein ubiquitination. E3 ubiquitin-protein ligase. Mediates TSG101 monoubiquitination at multiple sites. Plays a role in the regulation of endosome-to-lysosome trafficking. Impairs MC1R- and MC4R-signaling by competing with GNAS-binding to MCRs and inhibiting agonist-induced cAMP production. Does not inhibit ADRB2-signaling. Does not promote MC1R ubiquitination. Also acts as a negative regulator of hedgehog signaling. The chain is E3 ubiquitin-protein ligase MGRN1 (Mgrn1) from Rattus norvegicus (Rat).